Reading from the N-terminus, the 657-residue chain is MAEALPPRSPPDDVDIDPDFGPQSRPRSCTWPLQRLDSQGSPGKPNSGAGEAADTSSMIPEEEDDDYEGAASTATVLGTAGDKGTLVLLSGGESGQLAVLASPVGGVETLQVSLGGEGAGGAVSGAGGQQQQRKCSSRRNAWGNMSYADLITRAIESTQDKRLTLSQIYDWMVRSVPYFKDKGDSNSSAGWKNSIRHNLSLHSRFIRVQNEGSGKSSWWMINPEGGKGGKAPRRRAVSMDNSNKYTKSRGRAAKKKASLQASSDATDDSPSQLSKWPGSPTSRSSDKLDTWTDFRSRTNSNASTISGRLSPIPATTELDDVQDDDSPLSPMLYNSPGSLSPSISKPCTVEMPRITDMAETMNLNDGLPENLMDDLLDDISLTSSQQSSPGVLMQRSSSFTYGTKGSGIGSPSNNFNNTGSFNFPLTSLRQSPMQTIQENKQATFSSMNHYSNQSLQDLLNTDTLSHSDVLMTQSDPLMSQASTAVTAQNSRRNIILRNDPMMSFAAQPNQGGNLVNQNSLHQQQSLNSFQGGSRALSNNLSNTGLNDSSILESTKHQQQSSVSHSMQTISDTLSGSLYSSGVTLPTLGHEKFPTDLDLDIFNGSLECDMETIIRNDLMDADGLDFNFDTLISAQNVSLSVGSFTGAKQTSSQSWVPG.

2 disordered regions span residues 1–71 (MAEA…EGAA) and 216–320 (SSWW…ELDD). Residues 142 to 236 (WGNMSYADLI…KGGKAPRRRA (95 aa)) constitute a DNA-binding region (fork-head). A compositionally biased stretch (basic residues) spans 246-257 (TKSRGRAAKKKA). Over residues 268–283 (DSPSQLSKWPGSPTSR) the composition is skewed to polar residues. Positions 284–296 (SSDKLDTWTDFRS) are enriched in basic and acidic residues. The span at 297 to 307 (RTNSNASTISG) shows a compositional bias: polar residues.

Dephosphorylation may promote translocation to the nucleus where the protein induces transcription of target genes and triggers apoptosis. Localized to the animal hemisphere during early cleavage stages. At the late neurula, localized in the anterior neural plate, neural crest cells and in the hatching gland. As development progresses, expression becomes less localized, being observed in a variety of organs and tissues including the head, branchial arches and somites by stage 32.

Its subcellular location is the cytoplasm. It localises to the cytosol. The protein resides in the nucleus. In terms of biological role, transcriptional activator that recognizes and binds to the DNA sequence 5'-[AG]TAAA[TC]A-3' and regulates different processes, such as apoptosis and autophagy. Acts as a positive regulator of autophagy in skeletal muscle: in starved cells, enters the nucleus following dephosphorylation and binds the promoters of autophagy genes, thereby activating their expression, resulting in proteolysis of skeletal muscle proteins. Triggers apoptosis in the absence of survival factors, including neuronal cell death upon oxidative stress. In response to metabolic stress, translocates into the mitochondria where it promotes mtDNA transcription. Also acts as a key regulator of chondrogenic commitment of skeletal progenitor cells in response to lipid availability: when lipids levels are low, translocates to the nucleus and promotes expression of sox9, which induces chondrogenic commitment and suppresses fatty acid oxidation. Also acts as a key regulator of regulatory T-cells (Treg) differentiation. The sequence is that of Forkhead box protein O3 from Xenopus laevis (African clawed frog).